Here is an 845-residue protein sequence, read N- to C-terminus: SLIT and NTRK-like protein 2 (845 aa).

The first 21 residues, 1-21 (MLSGVWFLSVLTVAGILQTES), serve as a signal peptide directing secretion. Over 22-621 (RKTAKDICKI…LHTEVPLSVL (600 aa)) the chain is Extracellular. 2 cysteine pairs are disulfide-bonded: cysteine 29–cysteine 35 and cysteine 33–cysteine 46. LRR repeat units follow at residues 63-84 (RIYQ…EFVN), 87-108 (NAVT…AFSG), 111-132 (TLKR…TFLG), 135-156 (SLEY…AFSK), 159-180 (KLKV…VFRF), and 182-203 (LLTH…GVLE). Asparagine 84 is a glycosylation site (N-linked (GlcNAc...) asparagine). A required for interaction with PTPRD region spans residues 167–215 (DNLLLSLPSNVFRFVLLTHLDLRGNRLKVMPFAGVLEHIGGIMEIQLEE). Residues 216–265 (NPWNCTCDLLPLKAWLDTITVFVGEIVCETPFRLHGKDVTQLTRQDLCPR) enclose the LRRCT 1 domain. Disulfide bonds link cysteine 220–cysteine 243 and cysteine 222–cysteine 263. Positions 263 to 321 (CPRKSASDSSQRGSHADTHVQRLSPTMNPALNPTRAPKASRPPKMRNRPTPRVTVSKDR) are disordered. A compositionally biased stretch (polar residues) spans 283 to 293 (QRLSPTMNPAL). The LRRNT domain maps to 331–373 (QTKSPVPLTCPSSCVCTSQSSDNGLNVNCQERKFTNISDLQPK). 6 LRR repeats span residues 376–397 (SPKK…DLLE), 400–421 (SLDL…AFTN), 424–445 (SLRR…MFDG), 448–469 (SLQY…TFDA), 472–493 (NLQL…IFGG), and 495–516 (ALTR…GVLD). A glycan (N-linked (GlcNAc...) asparagine) is linked at asparagine 421. Residues 529–580 (NPWDCTCDIMGLKDWTEHANSPVIINEVTCESPAKHAGEILKFLGREAICPD) form the LRRCT 2 domain. Residues 622–642 (ILGLLVVFILSVCFGAGLFVF) traverse the membrane as a helical segment. At 643 to 845 (VLKRRKGVPS…LEKQTAISQL (203 aa)) the chain is on the cytoplasmic side. Phosphotyrosine is present on tyrosine 756.

Belongs to the SLITRK family. In terms of assembly, interacts with PTPRD; this interaction is PTPRD splicing-dependent and may induce pre-synaptic differentiation. Interacts with NTRK2. Expressed predominantly in the cerebral cortex of the brain but also at low levels in the spinal cord and medulla. Also expressed in some astrocytic brain tumors such as astrocytomas, oligodendrogliomas, glioblastomas, gangliogliomas and primitive neuroectodermal tumors.

Its subcellular location is the membrane. It localises to the cell membrane. The protein resides in the cell projection. The protein localises to the dendrite. Its function is as follows. It is involved in synaptogenesis and promotes excitatory synapse differentiation. Suppresses neurite outgrowth. Involved in the negative regulation of NTRK2. The chain is SLIT and NTRK-like protein 2 (SLITRK2) from Homo sapiens (Human).